The chain runs to 200 residues: ATP-dependent Clp protease proteolytic subunit (200 aa).

The active-site Nucleophile is the serine 104. Residue histidine 129 is part of the active site.

This sequence belongs to the peptidase S14 family. As to quaternary structure, fourteen ClpP subunits assemble into 2 heptameric rings which stack back to back to give a disk-like structure with a central cavity, resembling the structure of eukaryotic proteasomes.

It localises to the cytoplasm. The catalysed reaction is Hydrolysis of proteins to small peptides in the presence of ATP and magnesium. alpha-casein is the usual test substrate. In the absence of ATP, only oligopeptides shorter than five residues are hydrolyzed (such as succinyl-Leu-Tyr-|-NHMec, and Leu-Tyr-Leu-|-Tyr-Trp, in which cleavage of the -Tyr-|-Leu- and -Tyr-|-Trp bonds also occurs).. In terms of biological role, cleaves peptides in various proteins in a process that requires ATP hydrolysis. Has a chymotrypsin-like activity. Plays a major role in the degradation of misfolded proteins. The sequence is that of ATP-dependent Clp protease proteolytic subunit from Rubrobacter xylanophilus (strain DSM 9941 / JCM 11954 / NBRC 16129 / PRD-1).